The sequence spans 178 residues: uncharacterized protein (178 aa).

This is an uncharacterized protein from Escherichia coli (strain K12).